The following is a 442-amino-acid chain: Protein IQ-DOMAIN 33 (442 aa).

The 30-residue stretch at 159-188 (EEDAAVIIQSAFRSYLAIRRSKEEEETFAK) folds into the IQ domain. The segment at 184–212 (ETFAKEESFSGEESQDNASMGTSLEAQTG) is disordered. Residues 199 to 212 (DNASMGTSLEAQTG) show a composition bias toward polar residues. The tract at residues 270–282 (RERALAYAFSQQL) is calmodulin-binding. The tract at residues 375 to 442 (EKSSFKPSIS…ETSHKLNSST (68 aa)) is disordered. Residues 383–402 (ISKRKSVPSYKSQRKHHKLQ) are compositionally biased toward basic residues. Positions 385–392 (KRKSVPSY) match the Nuclear localization signal motif.

This sequence belongs to the IQD family. Binds to multiple calmodulin (CaM) in the presence of Ca(2+) and CaM-like proteins.

It is found in the nucleus. May be involved in cooperative interactions with calmodulins or calmodulin-like proteins. Recruits calmodulin proteins to microtubules, thus being a potential scaffold in cellular signaling and trafficking. May associate with nucleic acids and regulate gene expression at the transcriptional or post-transcriptional level. This Arabidopsis thaliana (Mouse-ear cress) protein is Protein IQ-DOMAIN 33.